Reading from the N-terminus, the 341-residue chain is CRISPR-associated endonuclease Cas1 (341 aa).

Mn(2+) contacts are provided by Glu-173, His-242, and Glu-257.

Belongs to the CRISPR-associated endonuclease Cas1 family. In terms of assembly, homodimer, forms a heterotetramer with a Cas2 homodimer. Requires Mg(2+) as cofactor. The cofactor is Mn(2+).

CRISPR (clustered regularly interspaced short palindromic repeat), is an adaptive immune system that provides protection against mobile genetic elements (viruses, transposable elements and conjugative plasmids). CRISPR clusters contain spacers, sequences complementary to antecedent mobile elements, and target invading nucleic acids. CRISPR clusters are transcribed and processed into CRISPR RNA (crRNA). Acts as a dsDNA endonuclease. Involved in the integration of spacer DNA into the CRISPR cassette. The sequence is that of CRISPR-associated endonuclease Cas1 from Korarchaeum cryptofilum (strain OPF8).